The chain runs to 171 residues: Transcription antitermination protein NusB (171 aa).

The protein belongs to the NusB family.

Functionally, involved in transcription antitermination. Required for transcription of ribosomal RNA (rRNA) genes. Binds specifically to the boxA antiterminator sequence of the ribosomal RNA (rrn) operons. The polypeptide is Transcription antitermination protein NusB (Brucella abortus (strain S19)).